Reading from the N-terminus, the 405-residue chain is MTQSQYRPGPDANGLFGSFGGRYVAETLMPLVLDLAREYEAAKADPKFLEELAYFQRDYIGRPNPLYFAERLTEHCGGAKIFFKREELNHTGAHKVNNCIGQVLLAKRMGKKRLIAETGAGMHGVATATVAARFGLPCVIYMGATDIERQQANVFRMKLLGAEIVPVTAGTGTLKDAMNEALRDWVTNVEDTFYLIGTVAGPHPYPAMVRDFQSIIGKETRAQLQEKEGRLPDSLVACVGGGSNAMGLFHEFLEEPSVQIIGVEAGGHGVHTDKHAASLNGGVPGVLHGNRTYLLQDEDGQITDAHSISAGLDYPGIGPEHAYLHEVKRVEYVSITDDEALDAFHATCRLEGIIPALESSHALAEAIKRAPKLPKDHLMVVCLSGRGDKDMQTVMNHMAAQEKQA.

The residue at position 95 (Lys-95) is an N6-(pyridoxal phosphate)lysine.

The protein belongs to the TrpB family. In terms of assembly, tetramer of two alpha and two beta chains. The cofactor is pyridoxal 5'-phosphate.

It carries out the reaction (1S,2R)-1-C-(indol-3-yl)glycerol 3-phosphate + L-serine = D-glyceraldehyde 3-phosphate + L-tryptophan + H2O. The protein operates within amino-acid biosynthesis; L-tryptophan biosynthesis; L-tryptophan from chorismate: step 5/5. In terms of biological role, the beta subunit is responsible for the synthesis of L-tryptophan from indole and L-serine. This is Tryptophan synthase beta chain (trpB) from Pseudomonas putida (Arthrobacter siderocapsulatus).